A 127-amino-acid chain; its full sequence is Fluoride-specific ion channel FluC (127 aa).

The next 4 membrane-spanning stretches (helical) occupy residues 6–26 (LAIS…GLGF), 37–57 (TLLA…FFAA), 67–87 (LLVI…SAEV), and 96–116 (LLWA…MTLL). Positions 75 and 78 each coordinate Na(+).

It belongs to the fluoride channel Fluc/FEX (TC 1.A.43) family.

The protein resides in the cell inner membrane. The catalysed reaction is fluoride(in) = fluoride(out). Its activity is regulated as follows. Na(+) is not transported, but it plays an essential structural role and its presence is essential for fluoride channel function. Functionally, fluoride-specific ion channel. Important for reducing fluoride concentration in the cell, thus reducing its toxicity. This chain is Fluoride-specific ion channel FluC, found in Tolumonas auensis (strain DSM 9187 / NBRC 110442 / TA 4).